The sequence spans 337 residues: MANSC domain-containing protein 4 (337 aa).

The signal sequence occupies residues 1–18; that stretch reads MRAVELLLLLGLASMVHG. The Extracellular portion of the chain corresponds to 19–278; the sequence is LCSPTVFYRD…SSENEEPWDG (260 aa). The region spanning 33–113 is the MANSC domain; sequence RFPGMLLDLE…LEPGASAILY (81 aa). N-linked (GlcNAc...) asparagine glycans are attached at residues Asn-114, Asn-227, and Asn-251. 2 stretches are compositionally biased toward polar residues: residues 216–230 and 239–260; these read SPSTDFTHSPGNKTI and TRVSQVPSRSRLNISKPSVNKT. Positions 216–277 are disordered; it reads SPSTDFTHSP…HSSENEEPWD (62 aa). The chain crosses the membrane as a helical span at residues 279-299; the sequence is APASAGVWLACVTLGAAVISL. Topologically, residues 300–337 are cytoplasmic; it reads CCRVVLGTSRCCGKRQGWSHMGQRSASGCRRNTLKENS. Positions 314–337 are disordered; sequence RQGWSHMGQRSASGCRRNTLKENS.

The protein localises to the membrane. The protein is MANSC domain-containing protein 4 (Mansc4) of Mus musculus (Mouse).